A 1102-amino-acid polypeptide reads, in one-letter code: DNA-directed RNA polymerase subunit beta (1102 aa).

Residues 1081–1102 (LPGKRTPSRPIYESLSTEGNQD) are disordered.

The protein belongs to the RNA polymerase beta chain family. In terms of assembly, in cyanobacteria the RNAP catalytic core is composed of 2 alpha, 1 beta, 1 beta', 1 gamma and 1 omega subunit. When a sigma factor is associated with the core the holoenzyme is formed, which can initiate transcription.

The enzyme catalyses RNA(n) + a ribonucleoside 5'-triphosphate = RNA(n+1) + diphosphate. Functionally, DNA-dependent RNA polymerase catalyzes the transcription of DNA into RNA using the four ribonucleoside triphosphates as substrates. This Trichodesmium erythraeum (strain IMS101) protein is DNA-directed RNA polymerase subunit beta.